The following is a 398-amino-acid chain: Substance-K receptor (398 aa).

The Extracellular portion of the chain corresponds to 1–32 (MGTCDIVTEANISSGPESNTTGITAFSMPSWQ). 2 N-linked (GlcNAc...) asparagine glycosylation sites follow: asparagine 11 and asparagine 19. A helical transmembrane segment spans residues 33-56 (LALWATAYLALVLVAVTGNAIVIW). Residues 57 to 69 (IILAHRRMRTVTN) lie on the Cytoplasmic side of the membrane. The chain crosses the membrane as a helical span at residues 70–90 (YFIVNLALADLCMAAFNAAFN). The Extracellular segment spans residues 91–107 (FVYASHNIWYFGRAFCY). Cysteines 106 and 181 form a disulfide. A helical transmembrane segment spans residues 108 to 129 (FQNLFPITAMFVSIYSMTAIAA). The Cytoplasmic segment spans residues 130–149 (DRYMAIVHPFQPRLSAPSTK). The helical transmembrane segment at 150-170 (AVIAGIWLVALALASPQCFYS) threads the bilayer. Residues 171–196 (TVTMDQGATKCVVAWPEDSGGKTLLL) lie on the Extracellular side of the membrane. A helical transmembrane segment spans residues 197-218 (YHLVVIALIYFLPLAVMFVAYS). The Cytoplasmic portion of the chain corresponds to 219–251 (VIGLTLWRRAVPGHQAHGANLRHLQAMKKFVKT). Residues 252 to 272 (MVLVVLTFAICWLPYHLYFIL) form a helical membrane-spanning segment. Residues 273-290 (GSFQEDIYCHKFIQQVYL) are Extracellular-facing. Residues 291 to 310 (ALFWLAMSSTMYNPIIYCCL) form a helical membrane-spanning segment. Topologically, residues 311–398 (NHRFRSGFRL…LAPTKTHVEI (88 aa)) are cytoplasmic. Cysteine 324 carries the S-palmitoyl cysteine lipid modification.

It belongs to the G-protein coupled receptor 1 family.

Its subcellular location is the cell membrane. In terms of biological role, this is a receptor for the tachykinin neuropeptide substance K (neurokinin A). It is associated with G proteins that activate a phosphatidylinositol-calcium second messenger system. The rank order of affinity of this receptor to tachykinins is: substance K &gt; neuromedin-K &gt; substance P. This Homo sapiens (Human) protein is Substance-K receptor (TACR2).